Consider the following 481-residue polypeptide: Endonuclease Bax1 (481 aa).

The interval 1–136 (MLPWELARFS…EKKIIKAPTI (136 aa)) is N-terminal domain (NTD). Residues 158 to 250 (YKLTVYVSSN…LKLANFKELK (93 aa)) form a central domain (CRD) region. Residues 260–364 (DSSVEEKFYK…YKRKIDISLV (105 aa)) are nuclease domain (NUS). Glutamate 265, aspartate 297, and glutamate 310 together coordinate a divalent metal cation. The C-terminal domain (CTD) stretch occupies residues 414–481 (PGYIFLKNYY…AIVIKDKKVN (68 aa)).

The protein belongs to the Bax1 family. Homodimer in solution, forms a heterodimer with XPB2. It depends on a divalent metal cation as a cofactor.

In terms of biological role, a dual DNA endonuclease probably involved in nucleotide excision repair (NER). The N-terminal nuclease domain (NTD) of the XPB2-Bax1 complex cleaves on one side of a DNA bubble (which presumably mimics DNA damage), while the NUS nuclease domain cleaves the other side, respectively called 5' and 3' nuclease activities. Interaction with XPB blocks the NTD nuclease activity. Binds to and stimulates the ATPase activity (and probably also helicase activity) of XPB2. Increases affinity of XPB2 for forked DNA. Does not stimulate the DNA-dependent activity of XPB1. In an XPB2-Bax1-bubble DNA crystal (12 bp of dsDNA, a 6 base bubble and 6 bp of dsDNA) the short 6 bp arm is unwound. The 2 helicase and the ThM domains of XPB2 with the NTD and CRD domains of Bax1 encircle the DNA, forming a tunnel where the 12 bp dsDNA and the ds-ssDNA junction are located. The ThM domain is wedged between the ssDNA tails, with the 5' ssDNA contacting Bax1 and the 3' ssDNA in a channel in XPB2. The nuclease domain (NUS) of Bax1 does not contact DNA in the bubble DNA complex. This is Endonuclease Bax1 from Sulfurisphaera tokodaii (strain DSM 16993 / JCM 10545 / NBRC 100140 / 7) (Sulfolobus tokodaii).